We begin with the raw amino-acid sequence, 359 residues long: Pyruvate dehydrogenase E1 component subunit beta, mitochondrial (359 aa).

The N-terminal 30 residues, 1–30, are a transit peptide targeting the mitochondrion; that stretch reads MAVVAVLVRKPLEQVSGLLRRRFHRTAPAA. Y67 carries the post-translational modification Phosphotyrosine. E89 lines the thiamine diphosphate pocket. The K(+) site is built by I142, A190, I191, D193, and N195. N6-acetyllysine is present on K354.

As to quaternary structure, heterotetramer of two PDHA1 and two PDHB subunits. The heterotetramer interacts with DLAT, and is part of the multimeric pyruvate dehydrogenase complex that contains multiple copies of pyruvate dehydrogenase (E1), dihydrolipoamide acetyltransferase (DLAT, E2) and lipoamide dehydrogenase (DLD, E3). These subunits are bound to an inner core composed of about 48 DLAT and 12 PDHX molecules. Interacts with DLAT. The cofactor is thiamine diphosphate.

Its subcellular location is the mitochondrion matrix. The catalysed reaction is N(6)-[(R)-lipoyl]-L-lysyl-[protein] + pyruvate + H(+) = N(6)-[(R)-S(8)-acetyldihydrolipoyl]-L-lysyl-[protein] + CO2. In terms of biological role, the pyruvate dehydrogenase complex catalyzes the overall conversion of pyruvate to acetyl-CoA and CO(2), and thereby links the glycolytic pathway to the tricarboxylic cycle. In Bos taurus (Bovine), this protein is Pyruvate dehydrogenase E1 component subunit beta, mitochondrial (PDHB).